We begin with the raw amino-acid sequence, 90 residues long: uncharacterized protein (90 aa).

A helical transmembrane segment spans residues 15–34 (HVLAISTFIATAAVASYFTT). The interval 34–65 (TKPKTKNEGKNSSALSQQKSGESSNSDAMGKD) is disordered. The segment covering 43 to 60 (KNSSALSQQKSGESSNSD) has biased composition (polar residues). An N-linked (GlcNAc...) asparagine glycan is attached at asparagine 44.

The protein localises to the mitochondrion membrane. This is an uncharacterized protein from Saccharomyces cerevisiae (strain ATCC 204508 / S288c) (Baker's yeast).